Consider the following 462-residue polypeptide: MKRYFIHTFGCQMNVNDSLRMSEVLSQMSYAPTPVPDNADLIILNTCSIREKAEDKMLSALGRYKPVKASRGALIGVGGCVAQQEKDKLLKKVPYLDFVFGPDNIARLPDIIGRVSAERERVVETAFVNSEEYVFPRADPETSRGKVTEFVTVMKGCDNVCSFCIVPHTRGREVSRAFPDVLVEVADLAKVGVREVTLIGQNVNSYAGGISFAQLLLRTAEVPGIERVRFTTSHPHDLSDELIEAFRVQPKITPHFHLPVQCGSDRILKMMRRDYTVVQYLERLAKLREARPGIAVTTDIIVGFPGETEEEFEMTMQLTEQVRYDNQFSFVYSPRPKTGAALREKDWGPVPHEVKIARLERLQKLQRRISGEITAALVGSEVEVMVEGHSRYDATKRFGRTPENRTVNFDGDAPAGSFVTVKVERATPNQLAGKQVALLKPPTVEPLPVPMAEAPFHVVAEA.

In terms of domain architecture, MTTase N-terminal spans 2–117 (KRYFIHTFGC…LPDIIGRVSA (116 aa)). C11, C47, C80, C157, C161, and C164 together coordinate [4Fe-4S] cluster. The 230-residue stretch at 143–372 (SRGKVTEFVT…QKLQRRISGE (230 aa)) folds into the Radical SAM core domain. The 63-residue stretch at 375-437 (AALVGSEVEV…PNQLAGKQVA (63 aa)) folds into the TRAM domain.

The protein belongs to the methylthiotransferase family. MiaB subfamily. In terms of assembly, monomer. [4Fe-4S] cluster serves as cofactor.

It is found in the cytoplasm. The catalysed reaction is N(6)-dimethylallyladenosine(37) in tRNA + (sulfur carrier)-SH + AH2 + 2 S-adenosyl-L-methionine = 2-methylsulfanyl-N(6)-dimethylallyladenosine(37) in tRNA + (sulfur carrier)-H + 5'-deoxyadenosine + L-methionine + A + S-adenosyl-L-homocysteine + 2 H(+). In terms of biological role, catalyzes the methylthiolation of N6-(dimethylallyl)adenosine (i(6)A), leading to the formation of 2-methylthio-N6-(dimethylallyl)adenosine (ms(2)i(6)A) at position 37 in tRNAs that read codons beginning with uridine. This chain is tRNA-2-methylthio-N(6)-dimethylallyladenosine synthase, found in Myxococcus xanthus (strain DK1622).